Consider the following 485-residue polypeptide: GTPase Obg (485 aa).

One can recognise an Obg domain in the interval 2-159 (PRFVDRVVIH…RELTLELKTV (158 aa)). The region spanning 160-341 (ADVGLIGFPS…FIFALWDMVR (182 aa)) is the OBG-type G domain. GTP contacts are provided by residues 166 to 173 (GFPSAGKS), 191 to 195 (FTTLV), 212 to 215 (DVPG), 292 to 295 (NKID), and 322 to 324 (STV). The Mg(2+) site is built by S173 and T193. The 79-residue stretch at 359–437 (PIAVDETGFS…IGDMTFDWEP (79 aa)) folds into the OCT domain. Residues 439–485 (TPAGVDVQMSGRGTDTRLEQTDRVSAAERKIARRERRQSTDEPGGEE) are disordered. The segment covering 452–468 (TDTRLEQTDRVSAAERK) has biased composition (basic and acidic residues).

It belongs to the TRAFAC class OBG-HflX-like GTPase superfamily. OBG GTPase family. Monomer. It depends on Mg(2+) as a cofactor.

It localises to the cytoplasm. An essential GTPase which binds GTP, GDP and possibly (p)ppGpp with moderate affinity, with high nucleotide exchange rates and a fairly low GTP hydrolysis rate. Plays a role in control of the cell cycle, stress response, ribosome biogenesis and in those bacteria that undergo differentiation, in morphogenesis control. In Mycobacterium sp. (strain MCS), this protein is GTPase Obg.